The following is an 863-amino-acid chain: Chloride channel protein A (863 aa).

The Cytoplasmic segment spans residues 1 to 124; that stretch reads MFRNNNNDNN…TSKLNHMLKT (124 aa). Residues 48-78 are disordered; that stretch reads ENGLINNNNNSHNNNNGGNNNNHGPSKVTHR. Positions 49–71 are enriched in low complexity; the sequence is NGLINNNNNSHNNNNGGNNNNHG. The next 7 helical transmembrane spans lie at 125 to 145, 171 to 191, 228 to 248, 289 to 309, 324 to 344, 367 to 387, and 408 to 428; these read FGKWIICFMIGVLVGITAYLV, IAFLVYYSINILFGVSASLVI, LVSLILAYSSGLILGPEGPMI, GAAAGVAAAFGAPIGGVLFGF, TFFACLIATFTTNIILQGFDM, LIPFALIGVAGGLFGALFVNL, and VLEVFILITITSTILYCCAAF. Residues 434–460 are disordered; sequence KTQANGSQTNSLDTSSSSILSSSGDNS. The segment covering 439 to 460 has biased composition (low complexity); that stretch reads GSQTNSLDTSSSSILSSSGDNS. Transmembrane regions (helical) follow at residues 518–538, 539–559, and 561–581; these read IFTIPTLAVFSLISFILTTIT, SGLMLASGLFIPMMLVGATFG, and LVGQVIALFVSVDPCIYALVG. 2 consecutive CBS domains span residues 661-742 and 816-863; these read MKTE…CHEQ and MNLS…KDLL.

It belongs to the chloride channel (TC 2.A.49) family.

It localises to the membrane. Functionally, voltage-gated chloride channel. Chloride channels may have several functions including the regulation of cell volume, membrane potential stabilization and signal transduction. The sequence is that of Chloride channel protein A (clcA) from Dictyostelium discoideum (Social amoeba).